The sequence spans 465 residues: UDP-N-acetylmuramate--L-alanine ligase (465 aa).

Residue 112-118 participates in ATP binding; sequence GTHGKTT.

It belongs to the MurCDEF family.

It is found in the cytoplasm. The catalysed reaction is UDP-N-acetyl-alpha-D-muramate + L-alanine + ATP = UDP-N-acetyl-alpha-D-muramoyl-L-alanine + ADP + phosphate + H(+). Its pathway is cell wall biogenesis; peptidoglycan biosynthesis. In terms of biological role, cell wall formation. This Burkholderia multivorans (strain ATCC 17616 / 249) protein is UDP-N-acetylmuramate--L-alanine ligase.